Here is a 242-residue protein sequence, read N- to C-terminus: Transcription factor Spi-C (242 aa).

A DNA-binding region (ETS) is located at residues 112–195 (LRLFEYLFES…IRRKLTYQFS (84 aa)).

Belongs to the ETS family. As to quaternary structure, binds DNA as a monomer. Expressed in lymphoid tissues, including spleen, bone marrow and thymus. According to PubMed:19037245, highly expressed in red pulp macrophages and, at lower, levels in B-cells, but not in other cells, including, monocytes, dendritic cells and other tissue macrophages. According to PubMed:10464163 expressed in pre- and mature B-cells but not in immature B-cells; according to PubMed:10187812 not expressed in pre- but predominantly in mature B-cells and at lower levels in macrophages.

The protein localises to the nucleus. Functionally, controls the development of red pulp macrophages required for red blood cells recycling and iron homeostasis. Transcription factor that binds to the PU-box, a purine-rich DNA sequence (5'-GAGGA[AT]-3') that can act as a lymphoid-specific enhancer. Regulates VCAM1 gene expression. The chain is Transcription factor Spi-C (Spic) from Mus musculus (Mouse).